The sequence spans 78 residues: Exodeoxyribonuclease 7 small subunit (78 aa).

The protein belongs to the XseB family. As to quaternary structure, heterooligomer composed of large and small subunits.

It is found in the cytoplasm. The enzyme catalyses Exonucleolytic cleavage in either 5'- to 3'- or 3'- to 5'-direction to yield nucleoside 5'-phosphates.. Functionally, bidirectionally degrades single-stranded DNA into large acid-insoluble oligonucleotides, which are then degraded further into small acid-soluble oligonucleotides. The protein is Exodeoxyribonuclease 7 small subunit of Finegoldia magna (strain ATCC 29328 / DSM 20472 / WAL 2508) (Peptostreptococcus magnus).